The chain runs to 364 residues: Phenylalanine dehydrogenase (364 aa).

Arg-62 contributes to the NAD(+) binding site. L-phenylalanine is bound at residue Lys-86. Lys-98 (proton donor/acceptor) is an active-site residue. NAD(+) contacts are provided by residues Asp-133, Ser-164, Thr-168, 255–256 (AM), and 276–278 (AAN). Position 278 (Asn-278) interacts with L-phenylalanine.

Belongs to the Glu/Leu/Phe/Val dehydrogenases family.

The enzyme catalyses L-phenylalanine + NAD(+) + H2O = 3-phenylpyruvate + NH4(+) + NADH + H(+). The protein operates within amino-acid biosynthesis; L-phenylalanine biosynthesis; L-phenylalanine from phenylpyruvate (PDH route): step 1/1. Functionally, catalyzes the reversible NAD(+)-dependent oxidative deamination of L-phenylalanine to phenylpyruvate. The protein is Phenylalanine dehydrogenase of Rhodococcus jostii (strain RHA1).